The chain runs to 492 residues: MSKNLTTRSEDYSKWYNELVVKADLAENSGVRGCMVIKPYGYAIWEKMQAELDRMFKETGHQNAYFPLFVPKSMFEAEEKNAEGFAKECAVVTHYRLKNDEDRPGKLMVDPNAKLEEELIVRPTSEAIIWSTYKGWVQSYRDLPLLINQWANVVRWEMRTRLFLRTAEFLWQEGHTAHATKDEAIEESEKMMNVYADFAENFMAIPVVKGFKTETERFAGADETYCIEALMQDGKALQAGTSHFLGQNFAKAFDVKFANAEGKQEHVWGTSWGVSTRLMGALIMTHSDDQGLVLPPNLAPIQVVIVPIHKTDEQLAQITAAVNELTAKLRKLKISVKYDDRTTQKPGFKFAEWELKGVPVRIAVGPKDLENGTFEVARRDNLSKEVVAAEKIVDHVNDLLEQIQKDLFDKALTYRNTHITEVNNFEEFKEVLEGKGGFISAHWDGTAATEEKIKDLTKATIRCIPLDAVEEAGTCVFTGEPSSKRVLFAKAY.

It belongs to the class-II aminoacyl-tRNA synthetase family. ProS type 3 subfamily. Homodimer.

The protein localises to the cytoplasm. The enzyme catalyses tRNA(Pro) + L-proline + ATP = L-prolyl-tRNA(Pro) + AMP + diphosphate. Functionally, catalyzes the attachment of proline to tRNA(Pro) in a two-step reaction: proline is first activated by ATP to form Pro-AMP and then transferred to the acceptor end of tRNA(Pro). The protein is Proline--tRNA ligase of Flavobacterium johnsoniae (strain ATCC 17061 / DSM 2064 / JCM 8514 / BCRC 14874 / CCUG 350202 / NBRC 14942 / NCIMB 11054 / UW101) (Cytophaga johnsonae).